The following is a 524-amino-acid chain: MSNRSFKNFIEEELGTFPQFLIYALLEWILIIILFIDGFLAFFSNQIAKFFDLKIPCLLCTRLDHVLVSRNPDFYYNDSICDAHKKNVSSLAYCHVHKKLSEIKRMCEGCLLSFATEKETDVDTYKSLIGILHKDLELLIDDERELQLAFPVAGSKKDENFYQVENRTNNSNDRFQRQQRCSCCGQIMKLKSDKPKSNNQSFFGAPSPSPRVSFNQRTLDLSNIKYTDLPEDDDALNTKGASLDAVDDRTPSFVKGGNKFFGIPLSDSAQNSPRWSVRSMKKSFVDQNGLESEVLDGDSILQHLNRQVRLDRKSLMDLYMELDEERSASAVAANNAMAMITRLQAEKAAVQMEALQYQRMMDEQAEYDQEALQSMNGLLVKREEEMKELEAGIEVYRLRYGLLREERGEAEEFLDEETKPVSDLPVCSSNHEEDLEQMKDSAEDSIGNNGVMIIEEEKENGSRKDMLVKEISEITERLNAIESKGELLQQISDVLDVSEGEAILLQISQNLHMLRSFIEMPTES.

A helical transmembrane segment spans residues 20-40 (FLIYALLEWILIIILFIDGFL). Residues 299–397 (SILQHLNRQV…ELEAGIEVYR (99 aa)) enclose the GTD-binding domain. Positions 462–490 (SRKDMLVKEISEITERLNAIESKGELLQQ) form a coiled coil.

The protein localises to the membrane. Probable membrane-anchored myosin receptors. The polypeptide is Probable myosin-binding protein 5 (Arabidopsis thaliana (Mouse-ear cress)).